Consider the following 457-residue polypeptide: Multidrug resistance protein MdtK (457 aa).

12 helical membrane passes run 11-31 (LSALAVPVIIAQVSQTSMGVV), 53-73 (IWLPAILFGHGLLLALTPVVA), 93-113 (FLAAIISVLTMLVLYQGEYAI), 127-147 (AIGYLHALLWGVPGYLFYQVL), 159-179 (PGMMIGFIGLLINIPINYIFI), 190-210 (GVGCGVATASVYWIMMLLMML), 249-269 (LLFEVTLFAVVALLVLPLGVV), 276-296 (IALNFSSLMFVLPLSVGVATT), 313-333 (IAAHTGIMAGVALACCTAIFT), 357-377 (LMLLAAVYQISDAVQVIGTGV), 387-407 (IFYITFVAYWVLGLPSGYLLA), and 417-437 (GPAGFWCGFIIGLTAAAVMMV).

It belongs to the multi antimicrobial extrusion (MATE) (TC 2.A.66.1) family. MdtK subfamily.

Its subcellular location is the cell inner membrane. In terms of biological role, multidrug efflux pump that functions probably as a Na(+)/drug antiporter. This Pectobacterium atrosepticum (strain SCRI 1043 / ATCC BAA-672) (Erwinia carotovora subsp. atroseptica) protein is Multidrug resistance protein MdtK.